The following is a 1464-amino-acid chain: Bridge-like lipid transfer protein family member 3B (1464 aa).

One can recognise a Chorein N-terminal domain in the interval 3 to 94 (GIIKKQILKH…DKVIMEMSTC (92 aa)). Disordered regions lie at residues 267–297 (STEQRKSMAPEPTQSSTVVASAQQVKTTQTS) and 409–436 (DHNVGSPPKSPTHASPQHTQTEKDYPLK). Over residues 278-297 (PTQSSTVVASAQQVKTTQTS) the composition is skewed to polar residues. 5 positions are modified to phosphoserine: serine 414, serine 418, serine 774, serine 935, and serine 1009. Disordered stretches follow at residues 1066–1089 (SKEETPPVRTLKSQSSLSGKPKER), 1164–1183 (LQNYGETSPDAISTNSEGAQ), and 1392–1413 (QRSVTQATQTSPGVPWPSQSAN). 2 stretches are compositionally biased toward polar residues: residues 1164–1182 (LQNYGETSPDAISTNSEGA) and 1394–1413 (SVTQATQTSPGVPWPSQSAN). Residues 1418–1456 (SFDFTREQLMEENESLKQELAKAKMALAEAHLEKDALLH) are a coiled coil.

In terms of assembly, monomer. Homodimer (via N-terminus). Associates with the Golgi-associated retrograde protein (GARP) complex. Interacts with GARP complex component VPS52. Interacts (via C-terminal coiled-coil domain) with STX6.

It localises to the cytoplasm. It is found in the cytosol. The protein localises to the early endosome. Its function is as follows. Tube-forming lipid transport protein which mediates the transfer of lipids between membranes at organelle contact sites. Required for retrograde traffic of vesicle clusters in the early endocytic pathway to the Golgi complex. This Homo sapiens (Human) protein is Bridge-like lipid transfer protein family member 3B.